Reading from the N-terminus, the 202-residue chain is Probable 1-Cys peroxiredoxin (202 aa).

One can recognise a Thioredoxin domain in the interval 1-148; the sequence is STHGKIRIHD…VVRAVDSLLT (148 aa). The active-site Cysteine sulfenic acid (-SOH) intermediate is Cys-30. Positions 178 to 201 match the Bipartite nuclear localization signal motif; sequence KKLFPQGFETKDLPSKKGYLRFTK.

Belongs to the peroxiredoxin family. Prx6 subfamily. Embryos.

Its subcellular location is the nucleus. It localises to the cytoplasm. It catalyses the reaction a hydroperoxide + [thioredoxin]-dithiol = an alcohol + [thioredoxin]-disulfide + H2O. Thiol-specific peroxidase that catalyzes the reduction of hydrogen peroxide and organic hydroperoxides to water and alcohols, respectively. Seems to contribute to the inhibition of germination during stress. The chain is Probable 1-Cys peroxiredoxin from Bromus secalinus (Rye brome).